A 591-amino-acid chain; its full sequence is Trihelix transcription factor PTL (591 aa).

Residues 1-32 (MDQDQHPQYGIPELRQLMKGGGRTTTTTPSTS) are disordered. The 60-residue stretch at 118–177 (GRWPRQETLTLLEIRSRLDHKFKEANQKGPLWDEVSRIMSEEHGYQRSGKKCREKFENLY) folds into the Myb-like 1 domain. Residues 380-410 (CSSPEERTNGNNEIRNNSETQNENGSDQTMT) form a disordered region. The span at 388–410 (NGNNEIRNNSETQNENGSDQTMT) shows a compositional bias: polar residues. The Myb-like 2 domain occupies 422-479 (WGEQEILKLMEIRTSMDSTFQEILGGCSDEFLWEEIAAKLIQLGFDQRSALLCKEKWE). A disordered region spans residues 491 to 551 (QINKKRKDNS…SNANANANVT (61 aa)). Residues 515–534 (IYNNRESGYNDNDPHQINEQ) show a composition bias toward polar residues. A compositionally biased stretch (low complexity) spans 535–551 (GNVGSSTSNANANANVT).

Interacts with KIN10. As to expression, confined to flowers, at low levels. Also present in 7-days-old seedlings. Barely detectable in other tissues such as young seedlings, roots, stems, leaves and siliques. Expressed in flower primordia, more precisely between newly arisen sepal primordia and also at the basal margins of developing sepals.

The protein resides in the nucleus. Functionally, transcription factor that prevents growth. Regulates perianth architecture in flower, mostly in the second whorl, probably by suppressing growth between initiating sepals, ensuring that they remain separate, and by modulating organ shapes. Required for the establishment of auxin flux. The protein is Trihelix transcription factor PTL (PTL) of Arabidopsis thaliana (Mouse-ear cress).